The primary structure comprises 226 residues: LIM domain-containing protein PLIM2a (226 aa).

2 consecutive LIM zinc-binding domains span residues aspartate 8–glutamate 68 and aspartate 104–glutamate 164. Residues glutamine 173–serine 226 are disordered. Over residues serine 191–aspartate 209 the composition is skewed to basic and acidic residues. Over residues alanine 210–serine 226 the composition is skewed to acidic residues.

In terms of assembly, interacts with F-actin. Predominantly expressed in flowers, in the tapetum and in pollen grains. Detected in leaves and stems.

The protein resides in the cytoplasm. Its subcellular location is the cytoskeleton. Its function is as follows. Binds to actin filaments and promotes cross-linking into thick bundles. Has an actin-stabilizing activity. The actin regulatory activities are inhibited by pH &gt; 6.8 but are [Ca(2+)] independent. This chain is LIM domain-containing protein PLIM2a, found in Arabidopsis thaliana (Mouse-ear cress).